The primary structure comprises 550 residues: MTATTAQLLTETTPWLRLSEHSEEIDRSHLRALFASDPDRVDEFTVTAGDLHIDYSKHLITRRTRELLLDLARSVDVEGNRDAMLHGEHINTTENRAVLHTALRLPRDASLSVDGQDIVTDVHETLEKMGVFTERLRDGRWRGATGKKITTVVNIGIGGSDLGPVMVYRALRHYADAGISLRFVSNLDPADLTDNLRGLDPAATLFIVTSKTFSTLETLTNATAARRWLVSALGEDAVTKHFVAVSTNAQPVAEFGIAPENIFGFWDWVGGRYSVGSAIGLSVMAAIGRERFTELLDGFHTIDEHFRTAPPESNAPLLLGMLGVWYSSFRGAQSRAVLPYSNDLVRFPAYLQQLTMESNGKSVHTDGSPVRCDTGEIFWGEPGTNGQHAFFQLLHQGTRLVPADFIGFAQSTDDLPTMSGTGSMHDLLMANFFAQSKVLAFGKTRKEIAAESASADLIPHKVMPGNRPSTTILAPRLTPSTLGQLIALYEHQVFVQGVVWGIDSFDQWGVELGKVQALALAPAVAGEAAPCTGDTSTDALIRTYRRLRHP.

Glu357 functions as the Proton donor in the catalytic mechanism. Residues His388 and Lys514 contribute to the active site.

This sequence belongs to the GPI family.

It localises to the cytoplasm. It carries out the reaction alpha-D-glucose 6-phosphate = beta-D-fructose 6-phosphate. The protein operates within carbohydrate biosynthesis; gluconeogenesis. It functions in the pathway carbohydrate degradation; glycolysis; D-glyceraldehyde 3-phosphate and glycerone phosphate from D-glucose: step 2/4. Catalyzes the reversible isomerization of glucose-6-phosphate to fructose-6-phosphate. This chain is Glucose-6-phosphate isomerase 3, found in Rhodococcus jostii (strain RHA1).